Reading from the N-terminus, the 586-residue chain is Asparagine synthetase, nodule [glutamine-hydrolyzing] (586 aa).

Residue Cys2 is the For GATase activity of the active site. A Glutamine amidotransferase type-2 domain is found at 2 to 185 (CGILAVLGCS…PGHLYSSKER (184 aa)). L-glutamine is bound by residues 50 to 54 (RLAIV), 75 to 77 (NGE), and Asp98. The Asparagine synthetase domain maps to 193–517 (PPWFNEAIIP…PQNSARLTVP (325 aa)). ATP is bound by residues Leu232, Val268, and 342 to 343 (SG).

In terms of tissue distribution, root nodules.

The catalysed reaction is L-aspartate + L-glutamine + ATP + H2O = L-asparagine + L-glutamate + AMP + diphosphate + H(+). It functions in the pathway amino-acid biosynthesis; L-asparagine biosynthesis; L-asparagine from L-aspartate (L-Gln route): step 1/1. The sequence is that of Asparagine synthetase, nodule [glutamine-hydrolyzing] (AS1) from Pisum sativum (Garden pea).